The following is a 166-amino-acid chain: Ureidoglycolate lyase (166 aa).

It belongs to the ureidoglycolate lyase family. Homodimer. Requires Ni(2+) as cofactor.

The enzyme catalyses (S)-ureidoglycolate = urea + glyoxylate. It participates in nitrogen metabolism; (S)-allantoin degradation. In terms of biological role, catalyzes the catabolism of the allantoin degradation intermediate (S)-ureidoglycolate, generating urea and glyoxylate. Involved in the utilization of allantoin as nitrogen source. The polypeptide is Ureidoglycolate lyase (Rhizobium etli (strain CIAT 652)).